The following is a 739-amino-acid chain: Ankyrin repeat and SAM domain-containing protein 6 (739 aa).

ANK repeat units follow at residues 1-30 (MGAS…FVDD), 57-86 (LEVR…DARV), 91-120 (TGWS…DPDH), 124-156 (LGNT…RPDD), 158-188 (KKRP…QVDV), 192-221 (DGAS…DVDR), 226-255 (HGWT…DVQL), and 259-290 (NGYT…LVDK). Basic residues predominate over residues 295–305 (QRGKSALRRRA). Disordered stretches follow at residues 295–320 (QRGK…TGLK) and 449–645 (LRDA…ITDE). Residues 462–478 (PGRSSAGSDTASISRVV) are compositionally biased toward polar residues. Low complexity-rich tracts occupy residues 490–506 (GPSP…HSSG) and 582–592 (SSRSKSTSPTL). Residues 593-603 (TPSPSPTPAHT) are compositionally biased toward pro residues. The span at 604 to 641 (PAPAHTPAHRPTGASADSQGSASTQQRSRSSGGSSSGT) shows a compositional bias: low complexity. The 64-residue stretch at 643–706 (TDEDELSGIL…LAAISELNAG (64 aa)) folds into the SAM domain.

It is found in the cell projection. Its subcellular location is the cilium. Required for renal function. This chain is Ankyrin repeat and SAM domain-containing protein 6 (anks6), found in Danio rerio (Zebrafish).